The following is a 267-amino-acid chain: MSMPIVREVNSDGSMLQPFSNPLWVPTPVGRSGRKHRTLKMCIVLPDTGYDVTQVCDPWQFFVKEGFMVNFATLTGIVAQADQRLLSGVKSWFIGATYKTKDIYERMSTTKEFLSPSNMSDMSFTFENFDLVYVPGGQDPAVLELVESPRLSSLLADYIPLCARVSGTRVLATMAQGAIAVQRAAPNLEIKSTTTPLYMERASYLFGASNPPAYTYTYIPESKYVPGPKTAHWVYSDEKFFYASGRYSGDVELLCKALRNLVASALH.

This sequence to S.pombe SpAC18G6.12c.

This is an uncharacterized protein from Schizosaccharomyces pombe (strain 972 / ATCC 24843) (Fission yeast).